A 287-amino-acid chain; its full sequence is (S)-phenoxypropionate/alpha-ketoglutarate-dioxygenase (287 aa).

The Fe cation site is built by histidine 102 and aspartate 104. 2-oxoglutarate is bound by residues threonine 129 and tryptophan 242. Histidine 257 contributes to the Fe cation binding site. Residue arginine 268 participates in 2-oxoglutarate binding.

This sequence belongs to the TfdA dioxygenase family. Monomer. It depends on Fe cation as a cofactor. The cofactor is L-ascorbate.

The enzyme catalyses (S)-2-(4-chloro-2-methylphenoxy)propanoate + 2-oxoglutarate + O2 = 2-methyl-4-chlorophenol + pyruvate + succinate + CO2. It catalyses the reaction (S)-(2,4-dichlorophenoxy)propanoate + 2-oxoglutarate + O2 = 2,4-dichlorophenol + pyruvate + succinate + CO2. Its pathway is xenobiotic degradation; 2-(2,4-dichlorophenoxy)propanoate degradation. Functionally, involved in the degradation of the phenoxypropionate herbicides. Catalyzes the enantiospecific cleavage of the ether bond in the herbicid S-dichlorprop ((S)-2-(2,4-dichlorophenoxy)propionate)(S-2,4-DP) and S-mecoprop ((S)-2-(4-chloro-2-methylphenoxy)propionate)(S-2,4-MCPP). It can also accept (RS)-2-(4-chloro-2-methylphenoxy)propionate ((RS)-2,4-MCPP) and phenoxyacetate derivatives such as 2,4-dichlorophenoxyacetate (2,4-D), however it can only accept 2-oxoglutarate as oxygen acceptor. In Sphingobium herbicidovorans (strain ATCC 700291 / DSM 11019 / CCUG 56400 / KCTC 2939 / LMG 18315 / NBRC 16415 / MH) (Sphingomonas herbicidovorans), this protein is (S)-phenoxypropionate/alpha-ketoglutarate-dioxygenase.